The following is a 227-amino-acid chain: PKHD-type hydroxylase BURPS668_A1690 (227 aa).

Residues 78–178 (KVFPPLFNRY…RVASFFWIQS (101 aa)) enclose the Fe2OG dioxygenase domain. His96, Asp98, and His159 together coordinate Fe cation. Arg169 is a binding site for 2-oxoglutarate.

Requires Fe(2+) as cofactor. L-ascorbate serves as cofactor.

This is PKHD-type hydroxylase BURPS668_A1690 from Burkholderia pseudomallei (strain 668).